The chain runs to 114 residues: 11.9 kDa wall protein (114 aa).

The propeptide occupies 1–6; that stretch reads MSFKTR.

The protein localises to the secreted. It is found in the cell wall. Functionally, may play a role in the structure of the hypha-forming fruit bodies. The chain is 11.9 kDa wall protein (TDF-1) from Tuber dryophilum (Truffle).